The sequence spans 301 residues: Rhodopsin (301 aa).

Topologically, residues 1 to 18 (LHMIHLHWYQYPPMNPMM) are extracellular. A helical transmembrane segment spans residues 19-43 (YPLLLIFMFITGIPCLAGNFVTIWV). The Cytoplasmic portion of the chain corresponds to 44–55 (FMTTKSLRSPAN). A helical membrane pass occupies residues 56 to 78 (LLVVNLAMSDFLMMFTMFPPMMI). Over 79–92 (TCYYHTWTLGPTFC) the chain is Extracellular. An intrachain disulfide couples Cys92 to Cys169. A helical transmembrane segment spans residues 93-115 (QVYAFLGNLFGCTSIWTMVFITF). The 'Ionic lock' involved in activated form stabilization motif lies at 116-118 (DRY). Over 116–134 (DRYNVIVKGVAGEPLSNKK) the chain is Cytoplasmic. A helical membrane pass occupies residues 135 to 155 (AALWILSAWVLSFSWCSAPFF). Residues 156–182 (GWNRYVPEGNLTGCGTDYLSEDALSRS) lie on the Extracellular side of the membrane. A glycan (N-linked (GlcNAc...) asparagine) is linked at Asn165. A helical membrane pass occupies residues 183–204 (YLYVYSVWVYFLPLLITIYCYV). Residues 205 to 245 (FIIKAVAAHEKGMRDQAKKMGIKSLRNEEAQKTSAECRLAK) lie on the Cytoplasmic side of the membrane. A helical membrane pass occupies residues 246–267 (IAMTTVALWFIAWTPYLLINWV). Residues 268-278 (GMFARSYLSPV) lie on the Extracellular side of the membrane. A helical transmembrane segment spans residues 279–300 (YTIWGYVFAKANAVYNPIVYAI). Lys288 carries the N6-(retinylidene)lysine modification.

The protein belongs to the G-protein coupled receptor 1 family. Opsin subfamily. In terms of assembly, homodimer. Interacts with GNAQ. Contains one covalently linked retinal chromophore.

It is found in the cell projection. It localises to the rhabdomere membrane. Functionally, photoreceptor required for image-forming vision at low light intensity. Can use both retinal and 3-dehydroretinal as visual pigment. Light-induced isomerization of 11-cis to all-trans retinal triggers a conformational change that activates signaling via G-proteins. Signaling via GNAQ probably mediates the activation of phospholipase C. This is Rhodopsin (RHO) from Cambarellus shufeldtii (Cajun dwarf crayfish).